We begin with the raw amino-acid sequence, 134 residues long: Translation initiation factor 2 subunit beta (134 aa).

It belongs to the eIF-2-beta/eIF-5 family. In terms of assembly, heterotrimer composed of an alpha, a beta and a gamma chain.

EIF-2 functions in the early steps of protein synthesis by forming a ternary complex with GTP and initiator tRNA. The protein is Translation initiation factor 2 subunit beta of Pyrobaculum arsenaticum (strain DSM 13514 / JCM 11321 / PZ6).